The following is a 114-amino-acid chain: Ribonuclease P protein component (114 aa).

It belongs to the RnpA family. In terms of assembly, consists of a catalytic RNA component (M1 or rnpB) and a protein subunit.

It catalyses the reaction Endonucleolytic cleavage of RNA, removing 5'-extranucleotides from tRNA precursor.. RNaseP catalyzes the removal of the 5'-leader sequence from pre-tRNA to produce the mature 5'-terminus. It can also cleave other RNA substrates such as 4.5S RNA. The protein component plays an auxiliary but essential role in vivo by binding to the 5'-leader sequence and broadening the substrate specificity of the ribozyme. The polypeptide is Ribonuclease P protein component (Alkaliphilus oremlandii (strain OhILAs) (Clostridium oremlandii (strain OhILAs))).